The sequence spans 391 residues: Phosphoglycerate kinase (391 aa).

Substrate-binding positions include 21–23 (DLN), Arg36, 59–62 (HLGR), Arg113, and Arg146. ATP-binding positions include Lys197, Glu319, and 345–348 (GGDT).

This sequence belongs to the phosphoglycerate kinase family. As to quaternary structure, monomer.

It is found in the cytoplasm. The enzyme catalyses (2R)-3-phosphoglycerate + ATP = (2R)-3-phospho-glyceroyl phosphate + ADP. Its pathway is carbohydrate degradation; glycolysis; pyruvate from D-glyceraldehyde 3-phosphate: step 2/5. This Shewanella sp. (strain MR-4) protein is Phosphoglycerate kinase.